The chain runs to 210 residues: V-type ATP synthase subunit D (210 aa).

Belongs to the V-ATPase D subunit family.

In terms of biological role, produces ATP from ADP in the presence of a proton gradient across the membrane. This Coprothermobacter proteolyticus (strain ATCC 35245 / DSM 5265 / OCM 4 / BT) protein is V-type ATP synthase subunit D.